A 779-amino-acid polypeptide reads, in one-letter code: Probable ATP-dependent RNA helicase DHX40 (779 aa).

The tract at residues 1 to 28 is disordered; the sequence is MSRFPAVAGRAPRRQEEGERSRDLQEER. The segment covering 13–28 has biased composition (basic and acidic residues); sequence RRQEEGERSRDLQEER. Residues 63-231 enclose the Helicase ATP-binding domain; that stretch reads IQAVRDNSFL…FGNCPIFDIP (169 aa). 76–83 contacts ATP; that stretch reads GNTGSGKT. The DEAH box signature appears at 173 to 176; that stretch reads DEAH. The Helicase C-terminal domain occupies 263-442; it reads TMDIHLNEMA…SVVLTLKCLA (180 aa). A disordered region spans residues 737–779; that stretch reads SKDVLKKMQRRNDDKSISDARARFLERKQQRTQDHSDTRKETG.

It belongs to the DEAD box helicase family. DEAH subfamily. As to expression, ubiquitously expressed.

The enzyme catalyses ATP + H2O = ADP + phosphate + H(+). Functionally, probable ATP-dependent RNA helicase. The polypeptide is Probable ATP-dependent RNA helicase DHX40 (DHX40) (Homo sapiens (Human)).